Reading from the N-terminus, the 104-residue chain is Acetylcholine receptor subunit alpha (104 aa).

Residues 1-104 are Extracellular-facing; sequence NPPAIFKSYC…YFIVNVIIPC (104 aa). Cystine bridges form between Cys10–Cys24 and Cys74–Cys75. The N-linked (GlcNAc...) asparagine glycan is linked to Asn23.

The protein belongs to the ligand-gated ion channel (TC 1.A.9) family. Acetylcholine receptor (TC 1.A.9.1) subfamily. Alpha-1/CHRNA1 sub-subfamily. One of the alpha chains that assemble within the acetylcholine receptor, a pentamer of two alpha chains, a beta, a delta, and a gamma or epsilon chains.

It is found in the postsynaptic cell membrane. Its subcellular location is the cell membrane. It catalyses the reaction K(+)(in) = K(+)(out). The enzyme catalyses Na(+)(in) = Na(+)(out). Functionally, upon acetylcholine binding, the AChR responds by an extensive change in conformation that affects all subunits and leads to opening of an ion-conducting channel across the plasma membrane. This chain is Acetylcholine receptor subunit alpha (CHRNA1), found in Naja naja (Indian cobra).